The chain runs to 376 residues: Transcription factor Sp6 (376 aa).

The segment at 1 to 70 (MLTAVCGSLG…VDFSQGYELP (70 aa)) is disordered. The 9aaTAD motif lies at 118-126 (GSWWDLHPG). Positions 167–223 (HPHAHHLLPAAGGQHLLGPPDGAKALEVAAPESQGLDSSLDGAARPKGSRRSVPRSS) are disordered. Over residues 173–186 (LLPAAGGQHLLGPP) the composition is skewed to low complexity. 3 C2H2-type zinc fingers span residues 254-278 (HNCH…LRWH), 284-308 (FVCN…LQTH), and 314-336 (FPCA…MKTH). Residues 333-343 (MKTHEGAKEEA) show a composition bias toward basic and acidic residues. The disordered stretch occupies residues 333 to 376 (MKTHEGAKEEAAGAASGEGKAGGAVEPPGGKGKREAEGSVAPSN).

Belongs to the Sp1 C2H2-type zinc-finger protein family. Ubiquitous.

It is found in the nucleus. Promotes cell proliferation. Plays a role in tooth germ growth. Plays a role in the control of enamel mineralization. Binds the AMBN promoter. This Homo sapiens (Human) protein is Transcription factor Sp6 (SP6).